We begin with the raw amino-acid sequence, 190 residues long: uncharacterized protein (190 aa).

This is an uncharacterized protein from Acanthamoeba polyphaga mimivirus (APMV).